The primary structure comprises 499 residues: Apolipoprotein N-acyltransferase (499 aa).

6 helical membrane passes run 18–38 (FSPY…LIIT), 50–70 (LGFL…YISI), 82–102 (IIII…FVIL), 105–125 (FFFP…AWMI), 156–176 (PIIG…MCVL), and 182–202 (SYYP…LNFF). A CN hydrolase domain is found at 217 to 461 (IQGNISQHTY…NDFLLEEVFS (245 aa)). The active-site Proton acceptor is Glu257. Lys320 is a catalytic residue. The active-site Nucleophile is the Cys372. The chain crosses the membrane as a helical span at residues 476–496 (LLFFSIICFIISFFIKIKLIF).

The protein belongs to the CN hydrolase family. Apolipoprotein N-acyltransferase subfamily.

It is found in the cell membrane. The catalysed reaction is N-terminal S-1,2-diacyl-sn-glyceryl-L-cysteinyl-[lipoprotein] + a glycerophospholipid = N-acyl-S-1,2-diacyl-sn-glyceryl-L-cysteinyl-[lipoprotein] + a 2-acyl-sn-glycero-3-phospholipid + H(+). The protein operates within protein modification; lipoprotein biosynthesis (N-acyl transfer). In terms of biological role, catalyzes the phospholipid dependent N-acylation of the N-terminal cysteine of apolipoprotein, the last step in lipoprotein maturation. This chain is Apolipoprotein N-acyltransferase, found in Wigglesworthia glossinidia brevipalpis.